Reading from the N-terminus, the 541-residue chain is Transcription factor STP2 (541 aa).

The segment at 13–32 is i; that stretch reads VLTRIYDYLKALVQQVIVPN. The interval 35–58 is disordered; sequence DDKSSKSTPFEKLEPAKQNHPQKD. Positions 73-105 are II; that stretch reads LFPKQNNKQLSLTSKSSVVPCALNLDNLETPFS. The segment at 204–226 adopts a C2H2-type 1 zinc-finger fold; sequence YICHYCDARFRIRGYLTRHIKKH. A C2H2-type 2; atypical zinc finger spans residues 232–267; the sequence is YHCPFFDNSISQELRCHTSGGFSRRDTYKTHLKSRH. A C2H2-type 3; atypical zinc finger spans residues 284 to 309; that stretch reads GVCTQCGEHFSTSESWVENHIEAGSC. Positions 452–462 are enriched in low complexity; sequence SSASSALSPLS. The interval 452–497 is disordered; that stretch reads SSASSALSPLSGDPITTTETNKSYPLDSEQSLLEPDKTEEDAINQS. Residues 465–482 are compositionally biased toward polar residues; that stretch reads PITTTETNKSYPLDSEQS.

Interacts (via Region II) with SSY5; protease component of the SPS-sensor. Post-translationally, activated by the amino acid-induced proteolytic removal of an N-terminal inhibitory domain by serine protease SSY5, an intrinsic component of the SPS-sensor. Processing requires at least 2 components of the SCF(GRR1) ubiquitin ligase complex, namely the F-box protein GRR1 and the E2 enzyme CDC34, but does not depend on the proteasome. Processing is negatively regulated by the protein phosphatase 2A regulatory subunit RTS1.

The protein resides in the cell membrane. The protein localises to the nucleus. Transcription factor involved in the regulation of gene expression in response to extracellular amino acid levels. Synthesized as latent cytoplasmic precursor, which, upon a signal initiated by the plasma membrane SPS (SSY1-PTR3-SSY5) amino acid sensor system, becomes proteolytically activated and relocates to the nucleus, where it induces the expression of SPS-sensor-regulated genes, including the amino-acid permeases BAP2 and BAP3. Binding to promoters is facilitated by DAL81. Involved in the repression of genes subject to nitrogen catabolite repression and genes involved in stress response. Negatively regulated by inner nuclear membrane proteins ASI1, ASI2 and ASI3, which prevent unprocessed precursor forms that escape cytoplasmic anchoring from inducing SPS-sensor-regulated genes. The protein is Transcription factor STP2 (STP2) of Saccharomyces cerevisiae (strain ATCC 204508 / S288c) (Baker's yeast).